The following is a 283-amino-acid chain: 4-diphosphocytidyl-2-C-methyl-D-erythritol kinase (283 aa).

K10 is an active-site residue. Position 95–105 (P95–S105) interacts with ATP. Residue D137 is part of the active site.

This sequence belongs to the GHMP kinase family. IspE subfamily.

It carries out the reaction 4-CDP-2-C-methyl-D-erythritol + ATP = 4-CDP-2-C-methyl-D-erythritol 2-phosphate + ADP + H(+). It participates in isoprenoid biosynthesis; isopentenyl diphosphate biosynthesis via DXP pathway; isopentenyl diphosphate from 1-deoxy-D-xylulose 5-phosphate: step 3/6. Its function is as follows. Catalyzes the phosphorylation of the position 2 hydroxy group of 4-diphosphocytidyl-2C-methyl-D-erythritol. This Limosilactobacillus reuteri (strain DSM 20016) (Lactobacillus reuteri) protein is 4-diphosphocytidyl-2-C-methyl-D-erythritol kinase.